Consider the following 345-residue polypeptide: Phosphoribosylformylglycinamidine cyclo-ligase (345 aa).

Belongs to the AIR synthase family.

It is found in the cytoplasm. It catalyses the reaction 2-formamido-N(1)-(5-O-phospho-beta-D-ribosyl)acetamidine + ATP = 5-amino-1-(5-phospho-beta-D-ribosyl)imidazole + ADP + phosphate + H(+). The protein operates within purine metabolism; IMP biosynthesis via de novo pathway; 5-amino-1-(5-phospho-D-ribosyl)imidazole from N(2)-formyl-N(1)-(5-phospho-D-ribosyl)glycinamide: step 2/2. The protein is Phosphoribosylformylglycinamidine cyclo-ligase of Shouchella clausii (strain KSM-K16) (Alkalihalobacillus clausii).